We begin with the raw amino-acid sequence, 489 residues long: Adenosylhomocysteinase (489 aa).

3 residues coordinate substrate: threonine 68, aspartate 151, and glutamate 213. 214-216 (TTT) lines the NAD(+) pocket. Substrate-binding residues include lysine 243 and aspartate 247. NAD(+) is bound by residues asparagine 248, 277-282 (GYGDVG), glutamate 300, asparagine 335, 356-358 (IGH), and asparagine 403.

This sequence belongs to the adenosylhomocysteinase family. Requires NAD(+) as cofactor.

The protein localises to the cytoplasm. The catalysed reaction is S-adenosyl-L-homocysteine + H2O = L-homocysteine + adenosine. The protein operates within amino-acid biosynthesis; L-homocysteine biosynthesis; L-homocysteine from S-adenosyl-L-homocysteine: step 1/1. Its function is as follows. May play a key role in the regulation of the intracellular concentration of adenosylhomocysteine. The polypeptide is Adenosylhomocysteinase (Mycobacterium sp. (strain JLS)).